The chain runs to 73 residues: DNA-directed RNA polymerase subunit omega (73 aa).

It belongs to the RNA polymerase subunit omega family. In terms of assembly, the RNAP catalytic core consists of 2 alpha, 1 beta, 1 beta' and 1 omega subunit. When a sigma factor is associated with the core the holoenzyme is formed, which can initiate transcription.

It carries out the reaction RNA(n) + a ribonucleoside 5'-triphosphate = RNA(n+1) + diphosphate. Promotes RNA polymerase assembly. Latches the N- and C-terminal regions of the beta' subunit thereby facilitating its interaction with the beta and alpha subunits. This chain is DNA-directed RNA polymerase subunit omega, found in Clostridium novyi (strain NT).